Consider the following 562-residue polypeptide: Arylsulfatase H (562 aa).

The Ca(2+) site is built by Asp15, Asp16, and Cys55. Cys55 acts as the Nucleophile in catalysis. A 3-oxoalanine (Cys) modification is found at Cys55. Position 115 (Lys115) interacts with substrate. His117 is an active-site residue. Helical transmembrane passes span 167-187 (LWISTVALALVPFLLLIPKFA) and 189-209 (WFSVPWKVIFVFALLAFLFFT). Substrate is bound at residue His271. Ca(2+) contacts are provided by Asp323 and Asn324. Position 348 (Lys348) interacts with substrate.

It belongs to the sulfatase family. It depends on Ca(2+) as a cofactor. In terms of processing, the conversion to 3-oxoalanine (also known as C-formylglycine, FGly), of a serine or cysteine residue in prokaryotes and of a cysteine residue in eukaryotes, is critical for catalytic activity.

Its subcellular location is the membrane. This Homo sapiens (Human) protein is Arylsulfatase H (ARSH).